A 178-amino-acid chain; its full sequence is ADP-ribosylation factor-like protein 5 (178 aa).

The N-myristoyl glycine moiety is linked to residue glycine 2. Residues glycine 24 to threonine 31, aspartate 67 to glutamine 71, and asparagine 126 to aspartate 129 each bind GTP.

Belongs to the small GTPase superfamily. Arf family.

It is found in the golgi apparatus. Functionally, GTP-binding protein that may be involved in protein trafficking; may modulate vesicle budding and uncoating within the Golgi apparatus. Plays a role in the shedding of pathogen spores from intestinal cells. This Caenorhabditis elegans protein is ADP-ribosylation factor-like protein 5 (arl-5).